Reading from the N-terminus, the 287-residue chain is ATP phosphoribosyltransferase (287 aa).

Belongs to the ATP phosphoribosyltransferase family. Long subfamily. Mg(2+) serves as cofactor.

It localises to the cytoplasm. The enzyme catalyses 1-(5-phospho-beta-D-ribosyl)-ATP + diphosphate = 5-phospho-alpha-D-ribose 1-diphosphate + ATP. It participates in amino-acid biosynthesis; L-histidine biosynthesis; L-histidine from 5-phospho-alpha-D-ribose 1-diphosphate: step 1/9. Its activity is regulated as follows. Feedback inhibited by histidine. Functionally, catalyzes the condensation of ATP and 5-phosphoribose 1-diphosphate to form N'-(5'-phosphoribosyl)-ATP (PR-ATP). Has a crucial role in the pathway because the rate of histidine biosynthesis seems to be controlled primarily by regulation of HisG enzymatic activity. The sequence is that of ATP phosphoribosyltransferase (hisG) from Methanothermobacter thermautotrophicus (strain ATCC 29096 / DSM 1053 / JCM 10044 / NBRC 100330 / Delta H) (Methanobacterium thermoautotrophicum).